A 253-amino-acid polypeptide reads, in one-letter code: Short chain dehydrogenase ple7 (253 aa).

A helical membrane pass occupies residues 5-25 (IVIVTGASHGIGLATVNLLLA). Val8, Arg116, Tyr148, Lys152, and Asn184 together coordinate NADP(+). Tyr148 serves as the catalytic Proton acceptor. Catalysis depends on Lys152, which acts as the Lowers pKa of active site Tyr. Residue Asn187 is glycosylated (N-linked (GlcNAc...) asparagine).

It belongs to the short-chain dehydrogenases/reductases (SDR) family.

The protein localises to the membrane. The protein operates within secondary metabolite biosynthesis; terpenoid biosynthesis. Its function is as follows. Short chain dehydrogenase; part of the gene cluster that mediates the biosynthesis of pleuromutilin, a tricyclic diterpene showing antibacterial properties. The geranylgeranyl diphosphate (GGPP) synthase ple4 catalyzes the first step in pleuromutilin biosynthesis. GGPP is then substrate of the premutilin synthase (PS) ple3 to yield premutilin. Premutilin synthase is a bifunctional enzyme composed of the fusion of a class II diterpene cyclase (DTC) and a class I diterpene synthase (DTS), with the corresponding domains and active sites containing characteristic aspartate-rich motifs. GGPP is first converted to mutildienyl-diphosphate (MPP) at the class II DTC site. MPP is subsequently further cyclized at the class I DTS site, followed by a 1,5-hydride shift and addition of water prior to terminating deprotonation, to yield premutilin. The cytochrome P450 monooxygenases ple5 and ple6 hydroxylate premutilin at C-11 and C-3, respectively, producing 11-hydroxypremutilin and 3-hydroxypremutilin. The combination of the actions of both ple5 and ple6 leads to the production of 3,11-dihydroxypremutilin. The short chain dehydrogenase ple7 further converts 3,11-dihydroxypremutilin into mutilin. The acetyltransferase ple2 then acetylates mutilin to produce 14-O-acetylmutilin. Finally, the cytochrome P450 monooxygenase ple1 catalyzes hydroxylation on the alpha position of the acetyl side chain of 14-O-acetylmutilin to yield pleuromutilin. This Rhodocybe pseudopiperita (Clitopilus pseudopiperitus) protein is Short chain dehydrogenase ple7.